The following is a 300-amino-acid chain: Tyrosine recombinase XerC (300 aa).

Residues 2-88 form the Core-binding (CB) domain; that stretch reads TQEGQLEKRF…SLRSFYTFLL (87 aa). The Tyr recombinase domain occupies 109-294; that stretch reads RLPKFFYSEE…TKEHLKSTYM (186 aa). Active-site residues include Arg-150, Lys-174, His-246, Arg-249, and His-272. Tyr-281 serves as the catalytic O-(3'-phospho-DNA)-tyrosine intermediate.

It belongs to the 'phage' integrase family. XerC subfamily. In terms of assembly, forms a cyclic heterotetrameric complex composed of two molecules of XerC and two molecules of XerD.

Its subcellular location is the cytoplasm. In terms of biological role, site-specific tyrosine recombinase, which acts by catalyzing the cutting and rejoining of the recombining DNA molecules. The XerC-XerD complex is essential to convert dimers of the bacterial chromosome into monomers to permit their segregation at cell division. It also contributes to the segregational stability of plasmids. In Listeria innocua serovar 6a (strain ATCC BAA-680 / CLIP 11262), this protein is Tyrosine recombinase XerC.